The primary structure comprises 374 residues: uncharacterized protein (374 aa).

The interval 197–223 (GTTTTTNNNNNNNNNNNNNNNNGTNIT) is disordered. Positions 198–223 (TTTTTNNNNNNNNNNNNNNNNGTNIT) are enriched in low complexity. Residues 302–342 (DEVSDCNDINTNLKKKRKQQEQLQIEKEKKLLTIQQEQTKI) adopt a coiled-coil conformation.

This is an uncharacterized protein from Dictyostelium discoideum (Social amoeba).